The primary structure comprises 142 residues: Midkine (142 aa).

The first 21 residues, 1–21 (MELRAFCVILLITFLAVSSQA), serve as a signal peptide directing secretion. Disulfide bonds link Cys36–Cys60, Cys44–Cys69, Cys51–Cys73, Cys83–Cys115, and Cys93–Cys125.

Belongs to the pleiotrophin family.

It is found in the secreted. Its function is as follows. Secreted protein that functions as a cytokine and growth factor and mediates its signal through cell-surface proteoglycan and non-proteoglycan receptors. Binds cell-surface proteoglycan receptors via their chondroitin sulfate (CS) groups. Thereby regulates many processes like inflammatory response, cell proliferation, cell adhesion, cell growth, cell survival, tissue regeneration, cell differentiation and cell migration. Inhibits mesoderm formation and promotes neural formation during development. Plays a role in development of the neuromuscular junction (NMJ). Has antibacterial activity against both Gram-positive and Gram-negative bacteria. This Xenopus tropicalis (Western clawed frog) protein is Midkine.